The sequence spans 82 residues: Protein C14 (82 aa).

The chain is Protein C14 from Homo sapiens (Human).